The primary structure comprises 579 residues: Glutamine--tRNA ligase (579 aa).

The 'HIGH' region signature appears at 41-51 (PEPNGYLHIGH). ATP contacts are provided by residues 42–44 (EPN) and 48–54 (HIGHAKA). The L-glutamine site is built by Asp74 and Tyr218. Residues Thr237, 285–286 (RL), and 293–295 (MSK) contribute to the ATP site. The short motif at 292-296 (VMSKR) is the 'KMSKS' region element.

This sequence belongs to the class-I aminoacyl-tRNA synthetase family. In terms of assembly, monomer.

It is found in the cytoplasm. It carries out the reaction tRNA(Gln) + L-glutamine + ATP = L-glutaminyl-tRNA(Gln) + AMP + diphosphate. The chain is Glutamine--tRNA ligase from Xanthomonas euvesicatoria pv. vesicatoria (strain 85-10) (Xanthomonas campestris pv. vesicatoria).